A 262-amino-acid chain; its full sequence is Type III pantothenate kinase (262 aa).

An ATP-binding site is contributed by 6–13 (DVGNTNTV). Substrate-binding positions include Y101 and 108–111 (GADR). The active-site Proton acceptor is the D110. A K(+)-binding site is contributed by D130. T133 contributes to the ATP binding site. T186 serves as a coordination point for substrate.

It belongs to the type III pantothenate kinase family. Homodimer. NH4(+) serves as cofactor. Requires K(+) as cofactor.

It localises to the cytoplasm. The enzyme catalyses (R)-pantothenate + ATP = (R)-4'-phosphopantothenate + ADP + H(+). It functions in the pathway cofactor biosynthesis; coenzyme A biosynthesis; CoA from (R)-pantothenate: step 1/5. Functionally, catalyzes the phosphorylation of pantothenate (Pan), the first step in CoA biosynthesis. This is Type III pantothenate kinase from Desulforapulum autotrophicum (strain ATCC 43914 / DSM 3382 / VKM B-1955 / HRM2) (Desulfobacterium autotrophicum).